The chain runs to 297 residues: Acetylglutamate kinase (297 aa).

Substrate is bound by residues Gly64–Gly65, Arg86, and Asn190.

The protein belongs to the acetylglutamate kinase family. ArgB subfamily.

Its subcellular location is the cytoplasm. It catalyses the reaction N-acetyl-L-glutamate + ATP = N-acetyl-L-glutamyl 5-phosphate + ADP. Its pathway is amino-acid biosynthesis; L-arginine biosynthesis; N(2)-acetyl-L-ornithine from L-glutamate: step 2/4. Functionally, catalyzes the ATP-dependent phosphorylation of N-acetyl-L-glutamate. This Solidesulfovibrio magneticus (strain ATCC 700980 / DSM 13731 / RS-1) (Desulfovibrio magneticus) protein is Acetylglutamate kinase.